The following is a 271-amino-acid chain: Shikimate dehydrogenase (NADP(+)) (271 aa).

Residues 19–21 and Thr-65 contribute to the shikimate site; that span reads SLS. The Proton acceptor role is filled by Lys-69. An NADP(+)-binding site is contributed by Glu-81. Residues Asn-90 and Asp-105 each coordinate shikimate. NADP(+)-binding positions include 128-132, 150-155, and Ile-211; these read GAGGA and NRTIEK. Residue Tyr-213 coordinates shikimate. Gly-234 contributes to the NADP(+) binding site.

The protein belongs to the shikimate dehydrogenase family. As to quaternary structure, homodimer.

The catalysed reaction is shikimate + NADP(+) = 3-dehydroshikimate + NADPH + H(+). It participates in metabolic intermediate biosynthesis; chorismate biosynthesis; chorismate from D-erythrose 4-phosphate and phosphoenolpyruvate: step 4/7. Involved in the biosynthesis of the chorismate, which leads to the biosynthesis of aromatic amino acids. Catalyzes the reversible NADPH linked reduction of 3-dehydroshikimate (DHSA) to yield shikimate (SA). This chain is Shikimate dehydrogenase (NADP(+)), found in Pyrococcus furiosus (strain ATCC 43587 / DSM 3638 / JCM 8422 / Vc1).